The following is a 289-amino-acid chain: Nucleotide-binding protein COPRO5265_0725 (289 aa).

ATP is bound at residue 9–16; it reads GLSGAGKS. A GTP-binding site is contributed by 59-62; the sequence is DSRS.

The protein belongs to the RapZ-like family.

Its function is as follows. Displays ATPase and GTPase activities. The protein is Nucleotide-binding protein COPRO5265_0725 of Coprothermobacter proteolyticus (strain ATCC 35245 / DSM 5265 / OCM 4 / BT).